The primary structure comprises 252 residues: Imidazole glycerol phosphate synthase subunit HisF (252 aa).

Catalysis depends on residues Asp-11 and Asp-130.

The protein belongs to the HisA/HisF family. Heterodimer of HisH and HisF.

It localises to the cytoplasm. The enzyme catalyses 5-[(5-phospho-1-deoxy-D-ribulos-1-ylimino)methylamino]-1-(5-phospho-beta-D-ribosyl)imidazole-4-carboxamide + L-glutamine = D-erythro-1-(imidazol-4-yl)glycerol 3-phosphate + 5-amino-1-(5-phospho-beta-D-ribosyl)imidazole-4-carboxamide + L-glutamate + H(+). The protein operates within amino-acid biosynthesis; L-histidine biosynthesis; L-histidine from 5-phospho-alpha-D-ribose 1-diphosphate: step 5/9. Its function is as follows. IGPS catalyzes the conversion of PRFAR and glutamine to IGP, AICAR and glutamate. The HisF subunit catalyzes the cyclization activity that produces IGP and AICAR from PRFAR using the ammonia provided by the HisH subunit. In Thermococcus onnurineus (strain NA1), this protein is Imidazole glycerol phosphate synthase subunit HisF.